A 599-amino-acid polypeptide reads, in one-letter code: Elongation factor 4 (599 aa).

The tr-type G domain maps to 2–184; the sequence is KNIRNFSIIA…RLVRDIPPPE (183 aa). GTP-binding positions include 14–19 and 131–134; these read DHGKST and NKID.

The protein belongs to the TRAFAC class translation factor GTPase superfamily. Classic translation factor GTPase family. LepA subfamily.

It is found in the cell inner membrane. The enzyme catalyses GTP + H2O = GDP + phosphate + H(+). Its function is as follows. Required for accurate and efficient protein synthesis under certain stress conditions. May act as a fidelity factor of the translation reaction, by catalyzing a one-codon backward translocation of tRNAs on improperly translocated ribosomes. Back-translocation proceeds from a post-translocation (POST) complex to a pre-translocation (PRE) complex, thus giving elongation factor G a second chance to translocate the tRNAs correctly. Binds to ribosomes in a GTP-dependent manner. This chain is Elongation factor 4, found in Escherichia coli O8 (strain IAI1).